Here is a 57-residue protein sequence, read N- to C-terminus: uncharacterized protein (57 aa).

This is an uncharacterized protein from Escherichia coli.